A 375-amino-acid chain; its full sequence is Matrix protein (375 aa).

It belongs to the morbillivirus/respirovirus/rubulavirus M protein family.

Its subcellular location is the virion. Functionally, the M protein has a crucial role in virus assembly and interacts with the RNP complex as well as with the viral membrane. This Mumps virus genotype A (strain Jeryl-Lynn) (MuV) protein is Matrix protein (M).